The chain runs to 419 residues: E3 ubiquitin-protein ligase RNFT1 (419 aa).

The interval 1–120 is disordered; the sequence is MKLRAQFDRG…SGESDLESGE (120 aa). 2 stretches are compositionally biased toward polar residues: residues 31–44 and 72–82; these read EPSS…SLTL and GSSSGSTNGRG. The segment covering 84-102 has biased composition (basic residues); it reads TSRRMRTASHSHSHTHGHG. The next 6 helical transmembrane spans lie at 141 to 161, 187 to 207, 217 to 237, 240 to 260, 270 to 290, and 303 to 323; these read FIVI…AVAV, LHCA…FYTF, FFAN…SVGV, FILK…PCPL, YMLI…PLWF, and VGLT…LLAL. Residues 352 to 403 are required for ubiquitin ligase activity and for protection against ER stress-induced cell death; it reads IREAGDICPICQADFKQPRVLVCQHIFCEECIAQWLNQERTCPLCRTVITDK. The RING-type zinc finger occupies 359–397; sequence CPICQADFKQPRVLVCQHIFCEECIAQWLNQERTCPLCR.

Its subcellular location is the endoplasmic reticulum membrane. It catalyses the reaction S-ubiquitinyl-[E2 ubiquitin-conjugating enzyme]-L-cysteine + [acceptor protein]-L-lysine = [E2 ubiquitin-conjugating enzyme]-L-cysteine + N(6)-ubiquitinyl-[acceptor protein]-L-lysine.. It functions in the pathway protein modification; protein ubiquitination. Functionally, E3 ubiquitin-protein ligase that acts in the endoplasmic reticulum (ER)-associated degradation (ERAD) pathway, which targets misfolded proteins that accumulate in the endoplasmic reticulum (ER) for ubiquitination and subsequent proteasome-mediated degradation. Protects cells from ER stress-induced apoptosis. This chain is E3 ubiquitin-protein ligase RNFT1 (rnft1), found in Danio rerio (Zebrafish).